The chain runs to 143 residues: MAMTAAAVPSSGSFQKQDEEWRAVLSPEQFRVLRLKGTDKRGKGEFTKKFEEGTYSCAGCGTALYKSTTKFDSGCGWPAFFDAIPGAIKQTPEAGGRRMEITCAVCDGHLGHVFKGEGYSTPTDQRHCVNSVSLKFASADSSK.

Residues 18–139 (DEEWRAVLSP…NSVSLKFASA (122 aa)) enclose the MsrB domain. The Zn(2+) site is built by C57, C60, C103, and C106. A disulfide bridge links C75 with C128. The Nucleophile role is filled by C128.

It belongs to the MsrB Met sulfoxide reductase family. The cofactor is Zn(2+).

The protein resides in the cytoplasm. It is found in the cytosol. It carries out the reaction L-methionyl-[protein] + [thioredoxin]-disulfide + H2O = L-methionyl-(R)-S-oxide-[protein] + [thioredoxin]-dithiol. Functionally, catalyzes the reduction of methionine sulfoxide (MetSO) to methionine in proteins. Plays a protective role against oxidative stress by restoring activity to proteins that have been inactivated by methionine oxidation. MSRB family specifically reduces the MetSO R-enantiomer. This chain is Peptide methionine sulfoxide reductase B8 (MSRB8), found in Arabidopsis thaliana (Mouse-ear cress).